A 292-amino-acid chain; its full sequence is Troponin I (292 aa).

An N-acetylserine modification is found at Ser-1. The tract at residues 1–149 (SSLEERRAAR…GLGGLSPEKK (149 aa)) is disordered. Over residues 46–55 (YSAPAEPAYD) the composition is skewed to low complexity. The span at 58-134 (AENRRRQQQE…EARRMAEEQK (77 aa)) shows a compositional bias: basic and acidic residues. The actin-binding stretch occupies residues 237–250 (DTKGKFVKPVLRKV). Positions 255 to 292 (SKLDKIQRKEAKKSDFRDNLKSSREHEADKEGGEGENE) are disordered.

Belongs to the troponin I family.

Functionally, troponin I is the inhibitory subunit of troponin, the thin filament regulatory complex which confers calcium-sensitivity to striated muscle actomyosin ATPase activity. The polypeptide is Troponin I (Chlamys nipponensis akazara (Akazara scallop)).